The following is a 227-amino-acid chain: Probable septum site-determining protein MinC (227 aa).

It belongs to the MinC family. As to quaternary structure, interacts with MinD and FtsZ.

Functionally, cell division inhibitor that blocks the formation of polar Z ring septums. Rapidly oscillates between the poles of the cell to destabilize FtsZ filaments that have formed before they mature into polar Z rings. Prevents FtsZ polymerization. This is Probable septum site-determining protein MinC from Laribacter hongkongensis (strain HLHK9).